The sequence spans 476 residues: 3-isopropylmalate dehydratase large subunit (476 aa).

Positions 357, 417, and 420 each coordinate [4Fe-4S] cluster.

This sequence belongs to the aconitase/IPM isomerase family. LeuC type 1 subfamily. As to quaternary structure, heterodimer of LeuC and LeuD. The cofactor is [4Fe-4S] cluster.

The catalysed reaction is (2R,3S)-3-isopropylmalate = (2S)-2-isopropylmalate. It participates in amino-acid biosynthesis; L-leucine biosynthesis; L-leucine from 3-methyl-2-oxobutanoate: step 2/4. Its function is as follows. Catalyzes the isomerization between 2-isopropylmalate and 3-isopropylmalate, via the formation of 2-isopropylmaleate. This chain is 3-isopropylmalate dehydratase large subunit, found in Mycobacterium leprae (strain TN).